The sequence spans 669 residues: Potassium voltage-gated channel subfamily KQT member 1 (669 aa).

Residues 1–120 (MDTASSPPNA…YNFLERPTGW (120 aa)) are Cytoplasmic-facing. Serine 27 carries the post-translational modification Phosphoserine; by PKA. The helical transmembrane segment at 121–142 (KCFVYHFTVFLIVLVCLIFSVL) threads the bilayer. Residues 143–153 (STIEQYAALAT) lie on the Extracellular side of the membrane. A helical membrane pass occupies residues 154–176 (GTLFWMEIVLVVFFGTEYVVRLW). Over 177 to 192 (SAGCRSKYVGIWGRLR) the chain is Cytoplasmic. A helical membrane pass occupies residues 193–218 (FARKPISIIDLIVVVASMVVLCVGSK). The Extracellular portion of the chain corresponds to 219–226 (GQVFATSA). Residues 227 to 242 (IRGIRFLQILRMLHVD) form a helical; Voltage-sensor membrane-spanning segment. Residues 238–246 (MLHVDRQGG) are interaction with KCNE3. Residues 243 to 260 (RQGGTWRLLGSVVFIHRQ) are Cytoplasmic-facing. Glutamine 244 is a binding site for a 1,2-diacyl-sn-glycero-3-phospho-(1D-myo-inositol-4,5-bisphosphate). Residues 261–283 (ELITTLYIGFLGLIFSSYFVYLA) traverse the membrane as a helical segment. Residues 284 to 299 (EKDAVNESGRIEFGSY) are Extracellular-facing. Asparagine 289 carries an N-linked (GlcNAc...) asparagine glycan. The segment at residues 300–320 (ADALWWGVVTVTTIGYGDKVP) is an intramembrane region (pore-forming). Over 321 to 322 (QT) the chain is Extracellular. The helical transmembrane segment at 323-348 (WVGKTIASCFSVFAISFFALPAGILG) threads the bilayer. Residues 349 to 669 (SGFALKVQQK…VPQTGPDEGS (321 aa)) are Cytoplasmic-facing. Residues 370–382 (AAASLIQTAWRCY) are interaction with CALM. Phosphoserine occurs at positions 407 and 409. Residues 515 to 529 (KVIRRMQYFVAKKKF) form an interaction with CALM; calcium-dependent region. The tract at residues 535–572 (PYDVRDVIEQYSQGHLNLMVRIKELQRRLDQSIGKPSL) is interaction with KCNE1 C-terminus. Residues 585-621 (SNTIGARLNRVEDKVTQLDQRLVIITDMLHQLLSLQQ) adopt a coiled-coil conformation. Residues 588–616 (IGARLNRVEDKVTQLDQRLVIITDMLHQL) are interaction with AKAP9. Residues 589-620 (GARLNRVEDKVTQLDQRLVIITDMLHQLLSLQ) form a C-terminal assembly domain (tetramerization) region.

It belongs to the potassium channel family. KQT (TC 1.A.1.15) subfamily. Kv7.1/KCNQ1 sub-subfamily. In terms of assembly, tetramer. Heterotetramer with KCNE1; targets to the membrane raft. Interacts (via C-terminus) with CALM; forms a heterooctameric structure (with 4:4 KCNQ1:CALM stoichiometry) in a calcium-independent manner. Interacts with AKAP9; targets protein kinase A (PKA) catalytic and regulatory subunits and protein phosphatase 1 (PP1) to the KCNQ1-KCNE1 complex, allowing PKA-mediated phosphorylation and increase of delayed rectifier potassium channel activity. Interacts with KCNE2; form a heterooligomer complex that targets to the membrane raft and leading to currents with an apparently instantaneous activation, a rapid deactivation process and a linear current-voltage relationship and decreases the amplitude of the outward current. Interacts with AP2M1; mediates estrogen-induced internalization via clathrin-coated vesicles. Interacts with NEDD4L; promotes internalization and decreases I(Ks) currents. Interacts with USP2; counteracts the NEDD4L-specific down-regulation of I(Ks) and restore plasma membrane localization. Heterotetramer with KCNQ5; has a voltage-gated potassium channel activity. Interacts with KCNE3; produces a current with nearly instantaneous activation with a linear current-voltage relationship and alters membrane raft localization. Interacts with KCNE4; impairs KCNQ1 localization in lipid rafts and inhibits voltage-gated potassium channel activity. Interacts with KCNE5; impairs KCNQ1 localization in lipid rafts and only conducts current upon strong and continued depolarization. Interacts with SLC5A3; forms coregulatory channel-transporter complexes that modulate Na(+)-coupled myo-inositol influx through the transporter. In terms of processing, phosphorylation at Ser-27 by PKA; increases delayed rectifier potassium channel activity of the KCNQ1-KCNE1 complex through a macromolecular complex that includes PKA, PP1, and the targeting protein AKAP9. Ubiquitinated by NEDD4L; promotes internalization. The ubiquitinylated form is internalized through a clathrin-mediated endocytosis by interacting with AP2M1 and is recycled back to the cell membrane via RAB4A and RAB11A. Post-translationally, deubiquitinated by USP2; counteracts the NEDD4L-specific down-regulation of I(Ks) and restores the membrane localization.

The protein localises to the cell membrane. It is found in the cytoplasmic vesicle membrane. It localises to the early endosome. Its subcellular location is the membrane raft. The protein resides in the endoplasmic reticulum. The protein localises to the basolateral cell membrane. It is found in the apical cell membrane. It carries out the reaction K(+)(in) = K(+)(out). PIP2 molecule is essential to activate KCNQ channels by inducing the coupling of the voltage-sensing domain (VSD) and the pore-forming domain (PD). Upon channel activation, PIP2 disrupts the VSD-calmodulin/CALM interactions, causing the release of CALM from the VSD which triggers the opening of the gate. Calcium potentiates KCNQ1 channel current through calcium-bound CALM. Calcium-bound CALM competes with PIP2 to stabilize the channel open state. Its function is as follows. Pore-forming subunit of the voltage-gated potassium (Kv) channel involved in the regulation of cardiomyocyte excitability and important in normal development and functions of myocardium, inner ear, stomach and colon. Associates with KCNE beta subunits that modulates current kinetics. Induces a voltage-dependent by rapidly activating and slowly deactivating potassium-selective outward current. Also promotes a delayed voltage activated potassium current showing outward rectification characteristic. During beta-adrenergic receptor stimulation participates in cardiac repolarization by associating with KCNE1 to form the I(Ks) cardiac potassium current that increases the amplitude and slows down the activation kinetics of outward potassium current I(Ks). Muscarinic agonist oxotremorine-M strongly suppresses KCNQ1/KCNE1 current. When associated with KCNE3, forms the potassium channel that is important for cyclic AMP-stimulated intestinal secretion of chloride ions. This interaction with KCNE3 is reduced by 17beta-estradiol, resulting in the reduction of currents. During conditions of increased substrate load, maintains the driving force for proximal tubular and intestinal sodium ions absorption, gastric acid secretion, and cAMP-induced jejunal chloride ions secretion. Allows the provision of potassium ions to the luminal membrane of the secretory canaliculus in the resting state as well as during stimulated acid secretion. When associated with KCNE2, forms a heterooligomer complex leading to currents with an apparently instantaneous activation, a rapid deactivation process and a linear current-voltage relationship and decreases the amplitude of the outward current. When associated with KCNE4, inhibits voltage-gated potassium channel activity. When associated with KCNE5, this complex only conducts current upon strong and continued depolarization. Also forms a heterotetramer with KCNQ5 that has a voltage-gated potassium channel activity. Binds with phosphatidylinositol 4,5-bisphosphate. KCNQ1-KCNE2 channel associates with Na(+)-coupled myo-inositol symporter in the apical membrane of choroid plexus epithelium and regulates the myo-inositol gradient between blood and cerebrospinal fluid with an impact on neuron excitability. This is Potassium voltage-gated channel subfamily KQT member 1 from Rattus norvegicus (Rat).